Reading from the N-terminus, the 521-residue chain is Protein translocase subunit SecD (521 aa).

6 helical membrane-spanning segments follow: residues 8-28, 359-379, 388-408, 410-430, 459-479, and 483-503; these read LKLASVLGVCLLGLLLCLPNG, AGILSLGVGFLLVVVFMVLFY, IALLANLVLMVAILSLFEATL, LPGMAGMLLTLGMAVDANILI, IVDSNATAFLAHVMLFVFGTG, and GFALTITIGIATTLFTTLLLS.

This sequence belongs to the SecD/SecF family. SecD subfamily. As to quaternary structure, forms a complex with SecF. Part of the essential Sec protein translocation apparatus which comprises SecA, SecYEG and auxiliary proteins SecDF-YajC and YidC.

The protein resides in the cell inner membrane. In terms of biological role, part of the Sec protein translocase complex. Interacts with the SecYEG preprotein conducting channel. SecDF uses the proton motive force (PMF) to complete protein translocation after the ATP-dependent function of SecA. In Acetobacter pasteurianus (strain NBRC 105184 / IFO 3283-01), this protein is Protein translocase subunit SecD.